The chain runs to 169 residues: Ribosome maturation factor RimM (169 aa).

The PRC barrel domain occupies 94 to 168 (DDEFYHADLI…RIVADPPEGL (75 aa)).

It belongs to the RimM family. As to quaternary structure, binds ribosomal protein uS19.

Its subcellular location is the cytoplasm. Its function is as follows. An accessory protein needed during the final step in the assembly of 30S ribosomal subunit, possibly for assembly of the head region. Essential for efficient processing of 16S rRNA. May be needed both before and after RbfA during the maturation of 16S rRNA. It has affinity for free ribosomal 30S subunits but not for 70S ribosomes. The polypeptide is Ribosome maturation factor RimM (Cereibacter sphaeroides (strain ATCC 17029 / ATH 2.4.9) (Rhodobacter sphaeroides)).